Here is a 287-residue protein sequence, read N- to C-terminus: DDRGK domain-containing protein 1 (287 aa).

The Lumenal portion of the chain corresponds to 1–5 (MDLIL). The helical transmembrane segment at 6–26 (LLGIAVALLVILVTLFFFTKG) threads the bilayer. Topologically, residues 27-287 (KGSQESGKYN…LINLVPVSAE (261 aa)) are cytoplasmic. Disordered stretches follow at residues 28–102 (GSQE…KRAK) and 135–164 (KVEA…RQEH). A compositionally biased stretch (low complexity) spans 44 to 68 (AQAAPRRAQVVRNQRNRARVAAAPA). The segment covering 85–102 (IPHADFNGEKMGAKKRAK) has biased composition (basic and acidic residues).

This sequence belongs to the DDRGK1 family. In terms of assembly, interacts with Atg9; the interaction is transient.

The protein resides in the endoplasmic reticulum membrane. Its function is as follows. Substrate adapter for ufmylation, the covalent attachment of the ubiquitin-like modifier UFM1 to substrate proteins. Required for ufmylation of Atg9; protects the nervous system during aging, possibly by stabilizing Atg9 and supporting its function. This is DDRGK domain-containing protein 1 from Culex quinquefasciatus (Southern house mosquito).